The sequence spans 205 residues: Isochorismatase domain-containing protein 2 (205 aa).

It belongs to the isochorismatase family. In terms of assembly, interacts with CDKN2A.

It is found in the cytoplasm. The protein resides in the nucleus. The sequence is that of Isochorismatase domain-containing protein 2 (ISOC2) from Macaca fascicularis (Crab-eating macaque).